The following is a 354-amino-acid chain: Serum paraoxonase/lactonase 3 (354 aa).

A disulfide bond links Cys-42 and Cys-352. A glycan (N-linked (GlcNAc...) asparagine) is linked at Asn-50. 2 residues coordinate Ca(2+): Glu-53 and Asp-54. His-114 (proton acceptor) is an active-site residue. Residue Ile-116 coordinates Ca(2+). Ser-165 is modified (phosphoserine). 5 residues coordinate Ca(2+): Asn-167, Asp-168, Asn-223, Asp-268, and Asn-269. 2 N-linked (GlcNAc...) asparagine glycosylation sites follow: Asn-269 and Asn-323.

Belongs to the paraoxonase family. Homodimer. Requires Ca(2+) as cofactor. Glycosylated. Post-translationally, the signal sequence is not cleaved.

It is found in the secreted. Its subcellular location is the extracellular space. It catalyses the reaction a phenyl acetate + H2O = a phenol + acetate + H(+). It carries out the reaction An aryl dialkyl phosphate + H2O = dialkyl phosphate + an aryl alcohol.. The enzyme catalyses an N-acyl-L-homoserine lactone + H2O = an N-acyl-L-homoserine + H(+). In terms of biological role, has low activity towards the organophosphate paraxon and aromatic carboxylic acid esters. Rapidly hydrolyzes lactones such as statin prodrugs (e.g. lovastatin). Hydrolyzes aromatic lactones and 5- or 6-member ring lactones with aliphatic substituents but not simple lactones or those with polar substituents. The polypeptide is Serum paraoxonase/lactonase 3 (Pon3) (Rattus norvegicus (Rat)).